Here is a 116-residue protein sequence, read N- to C-terminus: Cation channel sperm-associated auxiliary subunit TMEM262 (116 aa).

At 1–16 the chain is on the cytoplasmic side; the sequence is MWLQDRIATFFFPKGM. Residues 17–38 traverse the membrane as a helical segment; it reads MLTTAALMLFFLHLGIFIRDVH. Residues 39–51 lie on the Extracellular side of the membrane; it reads NFCITYHYDHMSF. Residues 52 to 72 form a helical membrane-spanning segment; the sequence is HYTVVLMFSQVISICWAAMGS. The Cytoplasmic segment spans residues 73-84; it reads LYAEMTENKYVC. Residues 85 to 107 traverse the membrane as a helical segment; that stretch reads FSALTILMLNGAMFFNRLSLEFL. Topologically, residues 108–116 are extracellular; sequence AIEYREEHH.

In terms of assembly, component of the CatSper complex or CatSpermasome composed of the core pore-forming members CATSPER1, CATSPER2, CATSPER3 and CATSPER4 as well as auxiliary members CATSPERB, CATSPERG, CATSPERD, CATSPERE, CATSPERZ, C2CD6/CATSPERT, TMEM249, TMEM262 and EFCAB9. HSPA1 may be an additional auxiliary complex member. The core complex members CATSPER1, CATSPER2, CATSPER3 and CATSPER4 form a heterotetrameric channel. The auxiliary CATSPERB, CATSPERG, CATSPERD and CATSPERE subunits form a pavilion-like structure over the pore which stabilizes the complex through interactions with CATSPER4, CATSPER3, CATSPER1 and CATSPER2 respectively. TMEM262/CATSPERH interacts with CATSPERB, further stabilizing the complex. C2CD6/CATSPERT interacts at least with CATSPERD and is required for targeting the CatSper complex in the flagellar membrane.

The protein resides in the cell projection. Its subcellular location is the cilium. It is found in the flagellum membrane. Functionally, auxiliary component of the CatSper complex, a complex involved in sperm cell hyperactivation. The chain is Cation channel sperm-associated auxiliary subunit TMEM262 from Homo sapiens (Human).